We begin with the raw amino-acid sequence, 240 residues long: Phosducin-like protein 2 (240 aa).

In terms of domain architecture, Phosducin spans 38-201; sequence QQEAMVKPYE…LEWKLSEVGA (164 aa). The tract at residues 89–240 is thioredoxin fold; that stretch reads FGELREISGN…DSSGSDTEAK (152 aa).

The protein belongs to the phosducin family. As to quaternary structure, interacts with the CCT chaperonin complex and actin. In terms of tissue distribution, testis-specific (at protein level).

Its subcellular location is the endoplasmic reticulum. Functionally, essential for male fertility, spermiogenesis and acrosome formation. The polypeptide is Phosducin-like protein 2 (Pdcl2) (Mus musculus (Mouse)).